Consider the following 57-residue polypeptide: Beta-defensin 3 (57 aa).

Gln16 carries the post-translational modification Pyrrolidone carboxylic acid. 3 disulfide bridges follow: Cys24-Cys53, Cys31-Cys46, and Cys36-Cys54.

This sequence belongs to the beta-defensin family. In terms of tissue distribution, neutrophilic granules.

Its subcellular location is the secreted. In terms of biological role, has bactericidal activity. Active against E.coli ML35 and S.aureus 502A. The protein is Beta-defensin 3 (DEFB3) of Bos taurus (Bovine).